A 142-amino-acid chain; its full sequence is Large ribosomal subunit protein uL13 (142 aa).

Belongs to the universal ribosomal protein uL13 family. As to quaternary structure, part of the 50S ribosomal subunit.

In terms of biological role, this protein is one of the early assembly proteins of the 50S ribosomal subunit, although it is not seen to bind rRNA by itself. It is important during the early stages of 50S assembly. This is Large ribosomal subunit protein uL13 from Coxiella burnetii (strain CbuK_Q154) (Coxiella burnetii (strain Q154)).